Consider the following 204-residue polypeptide: CASP-like protein 1U3 (204 aa).

At 1–19 (MCEGEKKKDSSSGALYCVN) the chain is on the cytoplasmic side. The chain crosses the membrane as a helical span at residues 20 to 40 (LALRIVVLGLAVAAAALMATA). Residues 41 to 63 (SQCTIFLYYGGPLHTITYKDFGP) lie on the Extracellular side of the membrane. A helical transmembrane segment spans residues 64 to 84 (FVYLVVASSIGAFMEAIAIFL). At 85 to 97 (TICKKKDGTPAKV) the chain is on the cytoplasmic side. Residues 98-118 (LLPLLDAAVPVLLYSATAAAF) form a helical membrane-spanning segment. Over 119–146 (AAGDMSYCAVGKRVGVCTTAAAGNFCNQ) the chain is Extracellular. The helical transmembrane segment at 147–167 (VHIAMYVSLAAGVALLVAEIV) threads the bilayer. Residues 168–204 (KHWPDSGKKKEGGGGGCGSDSDSDKSTPCHHGCHSKH) lie on the Cytoplasmic side of the membrane. Positions 173–204 (SGKKKEGGGGGCGSDSDSDKSTPCHHGCHSKH) are disordered.

This sequence belongs to the Casparian strip membrane proteins (CASP) family. Homodimer and heterodimers.

The protein localises to the cell membrane. In Oryza sativa subsp. japonica (Rice), this protein is CASP-like protein 1U3.